A 115-amino-acid chain; its full sequence is NADH-ubiquinone oxidoreductase chain 3 (115 aa).

3 helical membrane passes run 3–23, 55–75, and 86–106; these read LMAT…IAFW, FFLV…LLPL, and LTLL…AYEW.

This sequence belongs to the complex I subunit 3 family. As to quaternary structure, core subunit of respiratory chain NADH dehydrogenase (Complex I) which is composed of 45 different subunits. Interacts with TMEM186. Interacts with TMEM242.

Its subcellular location is the mitochondrion inner membrane. The catalysed reaction is a ubiquinone + NADH + 5 H(+)(in) = a ubiquinol + NAD(+) + 4 H(+)(out). In terms of biological role, core subunit of the mitochondrial membrane respiratory chain NADH dehydrogenase (Complex I) which catalyzes electron transfer from NADH through the respiratory chain, using ubiquinone as an electron acceptor. Essential for the catalytic activity of complex I. The protein is NADH-ubiquinone oxidoreductase chain 3 of Mammuthus primigenius (Siberian woolly mammoth).